We begin with the raw amino-acid sequence, 205 residues long: Outer-membrane lipoprotein LolB (205 aa).

Positions 1–17 (MFLRHFIVFSFIALLAG) are cleaved as a signal peptide. Cys18 carries N-palmitoyl cysteine lipidation. Cys18 carries the S-diacylglycerol cysteine lipid modification.

It belongs to the LolB family. Monomer.

The protein resides in the cell outer membrane. In terms of biological role, plays a critical role in the incorporation of lipoproteins in the outer membrane after they are released by the LolA protein. This chain is Outer-membrane lipoprotein LolB, found in Pseudomonas fluorescens (strain ATCC BAA-477 / NRRL B-23932 / Pf-5).